An 852-amino-acid chain; its full sequence is HHLTANTQSIPHFSTTLNAGSSARKRRSLYLRWGKGSNKIIACVGEGATSVPYQSAEKNDSLYSSTLVKREFPPGFWKDDLIDSLTSSHKVAASDEKRIETLISEIKNMFRCMGYGETNPSAYDTAWVARIPALDGSDNPHFPETVEWILQNQLKDGSWGEGFYFLAYDRILATLACIITLTLWRTGETQVHKGIEFFRTQAGKMEDEADSHRPSGFEIVFPAMLKEAKILGLDLPYDLPFLKQIIEKREAKLKRIPTDVLYALPTTLLYSLEGLQEIVDWQKIMKLQSKDGSFLSSPASTAAVFMRTGNKKCLDFLNFVLKKFGNHVPCHYPLDLFERLWAVDTVERLGIDRHFKEEIKDALDYVYSHWDERGIGWARENPVPDIDDTAMGLRILRLHGYNVSSDVLKTFRDENGEFFCFLGQTQRGVTDMLNVNRCSHVSFPGETIMEEAKLCTERYLRNALENVDAFDKWAFKKNIRGEVEYALKYTWHKSMPRLEARSYIENYGPNDAWLGKTVYRMPYISNEKYLELAKLDFNKLQSIHQTELQDLRRWWKSSGFSKLNFTRERVTEIYFSSASFMFEPEFSKCREVYTKASIFTLIFDDLYDAHGSLDDLKLFSEAVKRWDLSLLERMPQEMKICFLGFYNTFNEIAEEVHKRQGRDMLGHIQNVWEILLAAYTKEAEWSKTKYVPSFDEYIENASVSITLGTIVLISTLFIGEVLTDHVLSKINHGSRFLHLMGLTGRLVNDTKTYQAERGQGEEASAIQCYMKDHPEISEEEALNHVYNVMENALQELNKEFVNNKEVPPNCRRLVFNTARIMQLFYMQGDGLTLSHDMEIKDHVKTCLFIPIA.

Residues 1 to 53 constitute a chloroplast transit peptide; sequence HHLTANTQSIPHFSTTLNAGSSARKRRSLYLRWGKGSNKIIACVGEGATSVPY. Residue lysine 252 participates in substrate binding. 2 residues coordinate Mg(2+): aspartate 385 and aspartate 387. Residues 385 to 388 carry the DXDD motif motif; the sequence is DIDD. Position 472 (lysine 472) interacts with substrate. Aspartate 604, aspartate 608, asparagine 748, threonine 752, and glutamate 756 together coordinate Mg(2+). The DDXXD motif motif lies at 604–608; the sequence is DDLYD.

Belongs to the terpene synthase family. Tpsd subfamily. It depends on Mg(2+) as a cofactor.

It localises to the plastid. Its subcellular location is the chloroplast. It carries out the reaction (2E,6E,10E)-geranylgeranyl diphosphate = (+)-copalyl diphosphate. It catalyses the reaction (+)-copalyl diphosphate = isopimara-7,15-diene + diphosphate. Its pathway is terpene metabolism; oleoresin biosynthesis. Involved in defensive oleoresin formation in conifers in response to insect attack or other injury. Involved in diterpene (C20) olefins biosynthesis. Bifunctional enzyme that catalyzes two sequential cyclizations of geranylgeranyl diphosphate (GGPP) to isopimara-7,15-diene. The sequence is that of Bifunctional isopimaradiene synthase, chloroplastic (TPS-ISO) from Abies balsamea (Balsam fir).